A 131-amino-acid chain; its full sequence is Large ribosomal subunit protein bL19c (131 aa).

The protein belongs to the bacterial ribosomal protein bL19 family.

It is found in the plastid. The protein localises to the cyanelle. This protein is located at the 30S-50S ribosomal subunit interface and may play a role in the structure and function of the aminoacyl-tRNA binding site. This is Large ribosomal subunit protein bL19c (rpl19) from Cyanophora paradoxa.